The sequence spans 460 residues: Cysteine--tRNA ligase (460 aa).

C28 lines the Zn(2+) pocket. The 'HIGH' region signature appears at 30–40 (MTVYDYCHLGH). 3 residues coordinate Zn(2+): C209, H234, and E238. The 'KMSKS' region motif lies at 266–270 (KMSKS). K269 contacts ATP.

This sequence belongs to the class-I aminoacyl-tRNA synthetase family. In terms of assembly, monomer. Zn(2+) is required as a cofactor.

It localises to the cytoplasm. The enzyme catalyses tRNA(Cys) + L-cysteine + ATP = L-cysteinyl-tRNA(Cys) + AMP + diphosphate. This Pseudomonas putida (strain W619) protein is Cysteine--tRNA ligase.